The following is a 104-amino-acid chain: MYAIIKNGGKQYKVKEGEVVKLEKFDLGIGEKVEFDTVLMGQTAAGEVKIGAPTVAGAKVVGEVVEQGRHKKVKIMKFRRRKHSMKQQGHRQYFTAVKVSSISL.

Belongs to the bacterial ribosomal protein bL21 family. Part of the 50S ribosomal subunit. Contacts protein L20.

Its function is as follows. This protein binds to 23S rRNA in the presence of protein L20. The protein is Large ribosomal subunit protein bL21 of Francisella tularensis subsp. holarctica (strain FTNF002-00 / FTA).